The chain runs to 131 residues: MRESLFIIFFQFVCHSSNSLGVTLGSTFFRPVPLLTWTAPSIDLALSILALFFSCKCCCCWSSRRSRDLFFGKDSVVLLLLQLLSLENTFKWPAAVVDAAIPLLCFKLVSVSFNGDLIIIFVGETIFFFLF.

Residues 1 to 19 form the signal peptide; the sequence is MRESLFIIFFQFVCHSSNS. 2 helical membrane-spanning segments follow: residues 33 to 53 and 111 to 131; these read PLLT…ALFF and VSFN…FFLF.

It localises to the membrane. This is an uncharacterized protein from Saccharomyces cerevisiae (strain ATCC 204508 / S288c) (Baker's yeast).